The chain runs to 238 residues: 7-cyano-7-deazaguanine synthase (238 aa).

Residue 12–22 (FSGGQDSGTCL) participates in ATP binding. Positions 200, 215, 218, and 221 each coordinate Zn(2+).

The protein belongs to the QueC family. Zn(2+) is required as a cofactor.

The catalysed reaction is 7-carboxy-7-deazaguanine + NH4(+) + ATP = 7-cyano-7-deazaguanine + ADP + phosphate + H2O + H(+). It participates in purine metabolism; 7-cyano-7-deazaguanine biosynthesis. Functionally, catalyzes the ATP-dependent conversion of 7-carboxy-7-deazaguanine (CDG) to 7-cyano-7-deazaguanine (preQ(0)). The polypeptide is 7-cyano-7-deazaguanine synthase (Lawsonia intracellularis (strain PHE/MN1-00)).